Consider the following 471-residue polypeptide: Ribulose bisphosphate carboxylase large chain (471 aa).

Residues 1 to 2 (MS) constitute a propeptide that is removed on maturation. The residue at position 3 (proline 3) is an N-acetylproline. Lysine 14 bears the N6,N6,N6-trimethyllysine mark. Substrate-binding residues include asparagine 123 and threonine 173. Lysine 175 serves as the catalytic Proton acceptor. Position 177 (lysine 177) interacts with substrate. Residues lysine 201, aspartate 203, and glutamate 204 each contribute to the Mg(2+) site. Lysine 201 bears the N6-carboxylysine mark. Histidine 294 acts as the Proton acceptor in catalysis. Arginine 295, histidine 327, and serine 379 together coordinate substrate.

It belongs to the RuBisCO large chain family. Type I subfamily. In terms of assembly, heterohexadecamer of 8 large chains and 8 small chains; disulfide-linked. The disulfide link is formed within the large subunit homodimers. Requires Mg(2+) as cofactor. The disulfide bond which can form in the large chain dimeric partners within the hexadecamer appears to be associated with oxidative stress and protein turnover.

The protein resides in the plastid. It is found in the chloroplast. The enzyme catalyses 2 (2R)-3-phosphoglycerate + 2 H(+) = D-ribulose 1,5-bisphosphate + CO2 + H2O. It carries out the reaction D-ribulose 1,5-bisphosphate + O2 = 2-phosphoglycolate + (2R)-3-phosphoglycerate + 2 H(+). Its function is as follows. RuBisCO catalyzes two reactions: the carboxylation of D-ribulose 1,5-bisphosphate, the primary event in carbon dioxide fixation, as well as the oxidative fragmentation of the pentose substrate in the photorespiration process. Both reactions occur simultaneously and in competition at the same active site. In Drymophloeus subdistichus (Palm tree), this protein is Ribulose bisphosphate carboxylase large chain.